A 473-amino-acid chain; its full sequence is Phosphatidylserine synthase 1 (473 aa).

Alanine 2 carries the N-acetylalanine modification. The Cytoplasmic segment spans residues 2-35 (ASCVGSRTLSKDDVNYKMHFRMINEQQVEDITID). A helical membrane pass occupies residues 36 to 56 (FFYRPHTITLLSFTIVSLMYF). Residues 57–72 (AFTRDDSVPEDNIWRG) are Lumenal-facing. Residues 73–93 (ILSVIFFFLIISVLAFPNGPF) form a helical membrane-spanning segment. The Cytoplasmic segment spans residues 94–102 (TRPHPALWR). A helical transmembrane segment spans residues 103–123 (MVFGLSVLYFLFLVFLLFLNF). Over 124-186 (EQVKSLMYWL…AMKALLIRSY (63 aa)) the chain is Lumenal. A helical transmembrane segment spans residues 187 to 207 (GLCWTISITWELTELFFMHLL). Residues 208–216 (PNFAECWWD) are Cytoplasmic-facing. A helical membrane pass occupies residues 217-237 (QVILDILLCNGGGIWLGMVVC). Over 238-286 (RFLEMRTYHWASFKDIHTTTGKIKRAVLQFTPASWTYVRWFDPKSSFQR) the chain is Lumenal. Residues 287–307 (VAGVYLFMIIWQLTELNTFFL) form a helical membrane-spanning segment. At 308–319 (KHIFVFQASHPL) the chain is on the cytoplasmic side. A helical membrane pass occupies residues 320–342 (SWGRILFIGGITAPTVRQYYAYL). Residues 343 to 355 (TDTQCKRVGTQCW) are Lumenal-facing. The helical transmembrane segment at 356–376 (VFGVIGFLEAIVCIKFGQDLF) threads the bilayer. Residues 377 to 383 (SKTQILY) are Cytoplasmic-facing. The chain crosses the membrane as a helical span at residues 384–404 (VVLWLLCVAFTTFLCLYGMIW). The Lumenal segment spans residues 405–473 (YAEHYGHREK…SKVTNGVGKK (69 aa)). Phosphoserine is present on residues serine 417, serine 425, serine 442, and serine 454. The segment at 430 to 473 (WHHRKGTKGSEDSPPKHAGNNESHSSRRRNRHSKSKVTNGVGKK) is disordered. Residues 455–464 (SRRRNRHSKS) show a composition bias toward basic residues.

This sequence belongs to the phosphatidyl serine synthase family.

The protein localises to the endoplasmic reticulum membrane. It carries out the reaction a 1,2-diacyl-sn-glycero-3-phosphoethanolamine + L-serine = a 1,2-diacyl-sn-glycero-3-phospho-L-serine + ethanolamine. It catalyses the reaction a 1,2-diacyl-sn-glycero-3-phosphocholine + L-serine = a 1,2-diacyl-sn-glycero-3-phospho-L-serine + choline. Its pathway is phospholipid metabolism; phosphatidylserine biosynthesis. With respect to regulation, requires calcium ions. Inhibited by exogenous phosphatidylserine. Its function is as follows. Catalyzes a base-exchange reaction in which the polar head group of phosphatidylethanolamine (PE) or phosphatidylcholine (PC) is replaced by L-serine. Catalyzes mainly the conversion of phosphatidylcholine. Also converts, in vitro and to a lesser extent, phosphatidylethanolamine. This chain is Phosphatidylserine synthase 1 (PTDSS1), found in Homo sapiens (Human).